Consider the following 663-residue polypeptide: Zinc finger protein GLI2 (663 aa).

A disordered region spans residues 159-186; sequence ISSNSNCISDSSQSKQSSESAVSSTVNP. Residues 160–182 are compositionally biased toward low complexity; sequence SSNSNCISDSSQSKQSSESAVSS. 5 consecutive C2H2-type zinc fingers follow at residues 234–259, 267–294, 300–324, 330–355, and 361–386; these read TNCH…NNDH, FVCR…MRRH, HKCT…LRSH, YVCE…NRTH, and YVCK…KTVH. Disordered stretches follow at residues 374 to 440, 452 to 481, 544 to 578, and 619 to 663; these read DPSS…MEDC, VMCQ…DSGV, CSWV…SRTL, and SGIS…DIKL. Basic and acidic residues predominate over residues 386-402; the sequence is HGPDAHVTKKQRNDVHP. Residues 456 to 473 show a composition bias toward low complexity; sequence SSPGGQSSCSSEPSPLGS. Composition is skewed to polar residues over residues 563–578 and 619–647; these read GNGS…SRTL and SGIS…SSAD.

It belongs to the GLI C2H2-type zinc-finger protein family.

It localises to the nucleus. It is found in the cytoplasm. Its subcellular location is the cell projection. The protein localises to the cilium. Functions as a transcription regulator in the hedgehog (Hh) pathway. Functions as a transcriptional activator. May also function as transcriptional repressor. Binds to the DNA sequence 5'-GAACCACCCA-3'. Is involved in the smoothened (SHH) signaling pathway. Required for normal skeleton development. The chain is Zinc finger protein GLI2 from Gallus gallus (Chicken).